We begin with the raw amino-acid sequence, 501 residues long: Cystine/glutamate transporter (501 aa).

Over 1–43 the chain is Cytoplasmic; that stretch reads MVRKPVVSTISKGGYLQGNVNGRLPSLGNKEPPGQEKVQLKRK. At Ser26 the chain carries Phosphoserine. Residues 44–64 traverse the membrane as a helical segment; the sequence is VTLLRGVSIIIGTIIGAGIFI. Topologically, residues 65 to 74 are extracellular; it reads SPKGVLQNTG. The chain crosses the membrane as a helical span at residues 75–95; the sequence is SVGMSLTIWTVCGVLSLFGAL. Topologically, residues 96-101 are cytoplasmic; it reads SYAELG. The stretch at 102 to 116 is an intramembrane region; the sequence is TTIKKSGGHYTYILE. The Cytoplasmic portion of the chain corresponds to 117-130; sequence VFGPLPAFVRVWVE. A helical membrane pass occupies residues 131-150; the sequence is LLIIRPAATAVISLAFGRYI. Arg135 serves as a coordination point for L-glutamate. Residues 151–163 are Extracellular-facing; that stretch reads LEPFFIQCEIPEL. Residues 164–179 form a helical membrane-spanning segment; sequence AIKLITAVGITVVMVL. The Cytoplasmic portion of the chain corresponds to 180-193; it reads NSMSVSWSARIQIF. The chain crosses the membrane as a helical span at residues 194–210; sequence LTFCKLTAILIIIVPGV. Residues 211–234 are Extracellular-facing; sequence MQLIKGQTQNFKDAFSGRDSSITR. Residues 235–255 traverse the membrane as a helical segment; sequence LPLAFYYGMYAYAGWFYLNFV. Tyr244 is a binding site for L-glutamate. Residues 256 to 265 are Cytoplasmic-facing; it reads TEEVENPEKT. Residues 266–286 form a helical membrane-spanning segment; that stretch reads IPLAICISMAIVTIGYVLTNV. Topologically, residues 287–317 are extracellular; it reads AYFTTINAEELLLSNAVAVTFSERLLGNFSL. Residue Asn314 is glycosylated (N-linked (GlcNAc...) asparagine). A helical transmembrane segment spans residues 318–338; sequence AVPIFVALSCFGSMNGGVFAV. The Cytoplasmic portion of the chain corresponds to 339–364; sequence SRLFYVASREGHLPEILSMIHVRKHT. Residues 365–385 form a helical membrane-spanning segment; the sequence is PLPAVIVLHPLTMIMLFSGDL. The Extracellular segment spans residues 386 to 387; sequence DS. A helical transmembrane segment spans residues 388–408; sequence LLNFLSFARWLFIGLAVAGLI. At 409–422 the chain is on the cytoplasmic side; that stretch reads YLRYKCPDMHRPFK. Residues 423 to 443 traverse the membrane as a helical segment; that stretch reads VPLFIPALFSFTCLFMVALSL. Topologically, residues 444–449 are extracellular; sequence YSDPFS. The helical transmembrane segment at 450–470 threads the bilayer; that stretch reads TGIGSVITLTGVPAYYLFIIW. The Cytoplasmic segment spans residues 471–501; it reads DKKPRWFRIMSEKITRTLQIILEVVPEEDKL.

Belongs to the amino acid-polyamine-organocation (APC) superfamily. L-type amino acid transporter (LAT) (TC 2.A.3.8) family. In terms of assembly, disulfide-linked heterodimer with the amino acid transport protein SLC3A2/4F2hc; this interaction mediates cell membrane localization.

It localises to the cell membrane. The protein localises to the cell projection. The protein resides in the microvillus membrane. The catalysed reaction is L-cystine(out) + L-glutamate(in) = L-cystine(in) + L-glutamate(out). The enzyme catalyses an L-alpha-amino acid(in) + L-kynurenine(out) = an L-alpha-amino acid(out) + L-kynurenine(in). It catalyses the reaction N-acetyl-L-cysteine(out) + L-glutamate(in) = N-acetyl-L-cysteine(in) + L-glutamate(out). In terms of biological role, heterodimer with SLC3A2, that functions as an antiporter by mediating the exchange of extracellular anionic L-cystine and intracellular L-glutamate across the cellular plasma membrane. Provides L-cystine for the maintenance of the redox balance between extracellular L-cystine and L-cysteine and for the maintenance of the intracellular levels of glutathione that is essential for cells protection from oxidative stress. The transport is sodium-independent, electroneutral with a stoichiometry of 1:1, and is drove by the high intracellular concentration of L-glutamate and the intracellular reduction of L-cystine. In addition, mediates the import of L-kynurenine leading to anti-ferroptotic signaling propagation required to maintain L-cystine and glutathione homeostasis. Moreover, mediates N-acetyl-L-cysteine uptake into the placenta leading to subsequently down-regulation of pathways associated with oxidative stress, inflammation and apoptosis. In vitro can also transport L-aspartate. May participate in astrocyte and meningeal cell proliferation during development and can provide neuroprotection by promoting glutathione synthesis and delivery from non-neuronal cells such as astrocytes and meningeal cells to immature neurons. Controls the production of pheomelanin pigment directly. The protein is Cystine/glutamate transporter of Pongo abelii (Sumatran orangutan).